A 231-amino-acid polypeptide reads, in one-letter code: Flagellar L-ring protein (231 aa).

A signal peptide spans 1–20; it reads MTYRRIPLYLSCLFLLALSG. Residue Cys-21 is the site of N-palmitoyl cysteine attachment. Residue Cys-21 is the site of S-diacylglycerol cysteine attachment.

This sequence belongs to the FlgH family. As to quaternary structure, the basal body constitutes a major portion of the flagellar organelle and consists of four rings (L,P,S, and M) mounted on a central rod.

Its subcellular location is the cell outer membrane. The protein resides in the bacterial flagellum basal body. Assembles around the rod to form the L-ring and probably protects the motor/basal body from shearing forces during rotation. The protein is Flagellar L-ring protein of Desulfotalea psychrophila (strain LSv54 / DSM 12343).